Here is a 326-residue protein sequence, read N- to C-terminus: Ribosomal RNA small subunit methyltransferase H (326 aa).

S-adenosyl-L-methionine contacts are provided by residues 45–47 (GGH), aspartate 65, aspartate 113, and glutamine 120. The interval 299-326 (PSAEEITRNPRSRSARLRAAERIAHDGR) is disordered. Over residues 316 to 326 (RAAERIAHDGR) the composition is skewed to basic and acidic residues.

The protein belongs to the methyltransferase superfamily. RsmH family.

It localises to the cytoplasm. The catalysed reaction is cytidine(1402) in 16S rRNA + S-adenosyl-L-methionine = N(4)-methylcytidine(1402) in 16S rRNA + S-adenosyl-L-homocysteine + H(+). Its function is as follows. Specifically methylates the N4 position of cytidine in position 1402 (C1402) of 16S rRNA. In Thermomicrobium roseum (strain ATCC 27502 / DSM 5159 / P-2), this protein is Ribosomal RNA small subunit methyltransferase H.